Consider the following 137-residue polypeptide: Endoribonuclease YbeY (137 aa).

The Zn(2+) site is built by H107, H111, and D117.

This sequence belongs to the endoribonuclease YbeY family. Requires Zn(2+) as cofactor.

It is found in the cytoplasm. In terms of biological role, single strand-specific metallo-endoribonuclease involved in late-stage 70S ribosome quality control and in maturation of the 3' terminus of the 16S rRNA. The chain is Endoribonuclease YbeY from Bacteroides thetaiotaomicron (strain ATCC 29148 / DSM 2079 / JCM 5827 / CCUG 10774 / NCTC 10582 / VPI-5482 / E50).